Reading from the N-terminus, the 135-residue chain is NNCPLDWLPMNGLCYKIFNQLKTWEDAEMFCRKYKPGCHLASFHLYGESLEIAEYISDYHKGQDNVWIGLWDKKKDFSWEWTDRSCIDYLNWNKNQPDHYKNKEFCVELVSLSGYRLWNDQVCESKDAFLCQCKF.

4 cysteine pairs are disulfide-bonded: Cys-3–Cys-14, Cys-31–Cys-131, Cys-38–Cys-133, and Cys-106–Cys-123. One can recognise a C-type lectin domain in the interval 10–132 (MNGLCYKIFN…CESKDAFLCQ (123 aa)). Gln-96, Asp-98, Glu-104, Asn-119, and Asp-120 together coordinate Ca(2+). Positions 96 to 98 (QPD) match the Galactose-binding motif.

The protein belongs to the true venom lectin family. As to quaternary structure, homodimer; disulfide-linked. In terms of tissue distribution, expressed by the venom gland.

The protein resides in the secreted. In terms of biological role, beta-galactoside and N-acetylgalactosamine (GalNAc) specific C-type lectin. The sequence is that of C-type Lectin CRL from Crotalus ruber ruber (Red diamond rattlesnake).